Reading from the N-terminus, the 209-residue chain is MDLARQIAMELLDIQAVYLRPQQPFTWASGVKSPIYTDNRVTLSYPETRTLIENGFVKQIQKHFPNVDIIAGTATAGIPHGAIIADKMNLPFAYIRSKAKDHGVGNQIEGRVYSGQKMVIIEDLISTGGSVLEAVTAAQSQGIEVLGVVAIFTYQLAKAEQAFREADIPLVTLTDYNQLIKVAKVNGYITADQLVLLKKFKEDQMNWQS.

Residues R96, K100, H102, and 122–130 contribute to the 5-phospho-alpha-D-ribose 1-diphosphate site; that span reads EDLISTGGS. S126 provides a ligand contact to orotate.

This sequence belongs to the purine/pyrimidine phosphoribosyltransferase family. PyrE subfamily. As to quaternary structure, homodimer. Mg(2+) serves as cofactor.

It carries out the reaction orotidine 5'-phosphate + diphosphate = orotate + 5-phospho-alpha-D-ribose 1-diphosphate. It participates in pyrimidine metabolism; UMP biosynthesis via de novo pathway; UMP from orotate: step 1/2. Its function is as follows. Catalyzes the transfer of a ribosyl phosphate group from 5-phosphoribose 1-diphosphate to orotate, leading to the formation of orotidine monophosphate (OMP). In Streptococcus agalactiae serotype III (strain NEM316), this protein is Orotate phosphoribosyltransferase.